The following is a 232-amino-acid chain: Uracil phosphoribosyltransferase (232 aa).

38-42 (KGLVK) contributes to the GTP binding site. 5-phospho-alpha-D-ribose 1-diphosphate contacts are provided by residues R87, R112, and 140-148 (DPMIATGST). Residues I204 and 209–211 (GDA) each bind uracil. Residue D210 participates in 5-phospho-alpha-D-ribose 1-diphosphate binding.

This sequence belongs to the UPRTase family. Mg(2+) is required as a cofactor.

It carries out the reaction UMP + diphosphate = 5-phospho-alpha-D-ribose 1-diphosphate + uracil. It participates in pyrimidine metabolism; UMP biosynthesis via salvage pathway; UMP from uracil: step 1/1. With respect to regulation, allosterically activated by GTP. Catalyzes the conversion of uracil and 5-phospho-alpha-D-ribose 1-diphosphate (PRPP) to UMP and diphosphate. The protein is Uracil phosphoribosyltransferase of Thermococcus sibiricus (strain DSM 12597 / MM 739).